The chain runs to 242 residues: Biosynthetic peptidoglycan transglycosylase (242 aa).

The chain crosses the membrane as a helical span at residues 19-39; that stretch reads ILAALAVFWGGGIALFSVVPV.

It belongs to the glycosyltransferase 51 family.

Its subcellular location is the cell inner membrane. It carries out the reaction [GlcNAc-(1-&gt;4)-Mur2Ac(oyl-L-Ala-gamma-D-Glu-L-Lys-D-Ala-D-Ala)](n)-di-trans,octa-cis-undecaprenyl diphosphate + beta-D-GlcNAc-(1-&gt;4)-Mur2Ac(oyl-L-Ala-gamma-D-Glu-L-Lys-D-Ala-D-Ala)-di-trans,octa-cis-undecaprenyl diphosphate = [GlcNAc-(1-&gt;4)-Mur2Ac(oyl-L-Ala-gamma-D-Glu-L-Lys-D-Ala-D-Ala)](n+1)-di-trans,octa-cis-undecaprenyl diphosphate + di-trans,octa-cis-undecaprenyl diphosphate + H(+). It participates in cell wall biogenesis; peptidoglycan biosynthesis. Peptidoglycan polymerase that catalyzes glycan chain elongation from lipid-linked precursors. The sequence is that of Biosynthetic peptidoglycan transglycosylase from Salmonella schwarzengrund (strain CVM19633).